A 187-amino-acid chain; its full sequence is CASP-like protein SELMODRAFT_416718 (187 aa).

A helical transmembrane segment spans residues M1 to N21. The Extracellular portion of the chain corresponds to R22–D100. Residues T101–L119 traverse the membrane as a helical segment. At G120–V125 the chain is on the cytoplasmic side. Residues I126–L145 form a helical membrane-spanning segment. Residues N146–A155 lie on the Extracellular side of the membrane. A helical membrane pass occupies residues W156–I176. The Cytoplasmic portion of the chain corresponds to S177–K187.

It belongs to the Casparian strip membrane proteins (CASP) family. As to quaternary structure, homodimer and heterodimers.

The protein resides in the cell membrane. The chain is CASP-like protein SELMODRAFT_416718 from Selaginella moellendorffii (Spikemoss).